Here is a 72-residue protein sequence, read N- to C-terminus: Translation initiation factor IF-1 (72 aa).

In terms of domain architecture, S1-like spans 1–72 (MAKEDSIRMQ…NKGRIVYRER (72 aa)).

It belongs to the IF-1 family. In terms of assembly, component of the 30S ribosomal translation pre-initiation complex which assembles on the 30S ribosome in the order IF-2 and IF-3, IF-1 and N-formylmethionyl-tRNA(fMet); mRNA recruitment can occur at any time during PIC assembly.

The protein localises to the cytoplasm. In terms of biological role, one of the essential components for the initiation of protein synthesis. Stabilizes the binding of IF-2 and IF-3 on the 30S subunit to which N-formylmethionyl-tRNA(fMet) subsequently binds. Helps modulate mRNA selection, yielding the 30S pre-initiation complex (PIC). Upon addition of the 50S ribosomal subunit IF-1, IF-2 and IF-3 are released leaving the mature 70S translation initiation complex. The sequence is that of Translation initiation factor IF-1 from Halorhodospira halophila (strain DSM 244 / SL1) (Ectothiorhodospira halophila (strain DSM 244 / SL1)).